We begin with the raw amino-acid sequence, 453 residues long: Glutamate--tRNA ligase 2 (453 aa).

The 'HIGH' region motif lies at 10 to 20; it reads PSPTGFLHIGG. The short motif at 232–236 is the 'KMSKS' region element; that stretch reads KLSKR. Lys-235 provides a ligand contact to ATP.

The protein belongs to the class-I aminoacyl-tRNA synthetase family. Glutamate--tRNA ligase type 1 subfamily. As to quaternary structure, monomer.

The protein localises to the cytoplasm. It carries out the reaction tRNA(Glu) + L-glutamate + ATP = L-glutamyl-tRNA(Glu) + AMP + diphosphate. Its function is as follows. Catalyzes the attachment of glutamate to tRNA(Glu) in a two-step reaction: glutamate is first activated by ATP to form Glu-AMP and then transferred to the acceptor end of tRNA(Glu). The chain is Glutamate--tRNA ligase 2 from Wolbachia sp. subsp. Brugia malayi (strain TRS).